Reading from the N-terminus, the 472-residue chain is Eukaryotic translation initiation factor 2 subunit 3 (472 aa).

Ala2 carries the post-translational modification N-acetylalanine. At Ser16 the chain carries Phosphoserine. The tr-type G domain occupies 39–248 (QATINIGTIG…IVKKIPVPPR (210 aa)). The segment at 48–55 (GHVAHGKS) is G1. Position 51 to 56 (51 to 56 (AHGKST)) interacts with GTP. The tract at residues 76–80 (NITIK) is G2. Positions 134–137 (DCPG) are G3. GTP-binding positions include 190-193 (NKID) and 225-227 (SAQ). Residues 190-193 (NKID) are G4. Residues 225 to 227 (SAQ) form a G5 region. The tract at residues 457 to 469 (GQIRRGVTIKPTV) is interacts with CDC123.

This sequence belongs to the TRAFAC class translation factor GTPase superfamily. Classic translation factor GTPase family. EIF2G subfamily. As to quaternary structure, eukaryotic translation initiation factor 2 eIF2 is a heterotrimeric complex composed of an alpha (EIF2S1), a beta (EIF2S2) and a gamma (EIF2S3) chain. eIF2 is member of the 43S pre-initiation complex (43S PIC). Interacts (via C-terminus) with CDC123; the interaction is direct.

Its subcellular location is the cytoplasm. The protein localises to the cytosol. It catalyses the reaction GTP + H2O = GDP + phosphate + H(+). Functionally, member of the eIF2 complex that functions in the early steps of protein synthesis by forming a ternary complex with GTP and initiator tRNA. This complex binds to a 40S ribosomal subunit, followed by mRNA binding to form the 43S pre-initiation complex (43S PIC). Junction of the 60S ribosomal subunit to form the 80S initiation complex is preceded by hydrolysis of the GTP bound to eIF2 and release of an eIF2-GDP binary complex. In order for eIF2 to recycle and catalyze another round of initiation, the GDP bound to eIF2 must exchange with GTP by way of a reaction catalyzed by eIF-2B. In Bos taurus (Bovine), this protein is Eukaryotic translation initiation factor 2 subunit 3 (EIF2S3).